The chain runs to 637 residues: Neutral ceramidase (637 aa).

His34 contacts Mg(2+). Zn(2+)-binding residues include His96 and His204. Catalysis depends on Ser256, which acts as the Nucleophile. Residues Glu417 and Tyr453 each contribute to the Zn(2+) site. The Mg(2+) site is built by Asp575, Asp577, and Thr580.

Belongs to the neutral ceramidase family. The cofactor is Zn(2+). It depends on Mg(2+) as a cofactor.

It catalyses the reaction an N-acylsphing-4-enine + H2O = sphing-4-enine + a fatty acid. The catalysed reaction is an N-acylsphinganine + H2O = sphinganine + a fatty acid. The enzyme catalyses an N-acyl-(4R)-4-hydroxysphinganine + H2O = (4R)-hydroxysphinganine + a fatty acid. It carries out the reaction N-(9Z-octadecenoyl)-sphing-4-enine + H2O = sphing-4-enine + (9Z)-octadecenoate. It catalyses the reaction N-(hexanoyl)sphing-4-enine + H2O = hexanoate + sphing-4-enine. The catalysed reaction is N-hexadecanoylsphing-4-enine + H2O = sphing-4-enine + hexadecanoate. The enzyme catalyses N-octadecanoylsphing-4-enine + H2O = sphing-4-enine + octadecanoate. It carries out the reaction N-eicosanoyl-sphing-4-enine + H2O = eicosanoate + sphing-4-enine. It catalyses the reaction N-(15Z-tetracosenoyl)-sphing-4-enine + H2O = (15Z)-tetracosenoate + sphing-4-enine. The catalysed reaction is N-tetracosanoyl-sphing-4-enine + H2O = tetracosanoate + sphing-4-enine. Its activity is regulated as follows. 90% of activity is inhibited by nickel, zinc and calcium ions. Magnesium, cobalt, copper and manganese ions inhibit between 50 and 80% of activity. Functionally, catalyzes the cleavage of the N-acyl linkage of the ceramides (Cers) to yield sphingosine (Sph) and free fatty acid. Also catalyzes the synthesis of Cers from Sph and fatty acid. Cers containning C6-C24 fatty acids are well hydrolyzed, and Cers with mono unsaturated fatty acids are much more hydrolyzed than those with saturated fatty acids. This Mycobacterium tuberculosis (strain ATCC 25618 / H37Rv) protein is Neutral ceramidase.